A 233-amino-acid polypeptide reads, in one-letter code: Phosphoenolpyruvate guanylyltransferase 1 (233 aa).

Positions 154, 171, and 174 each coordinate phosphoenolpyruvate.

It belongs to the CofC family.

The enzyme catalyses phosphoenolpyruvate + GTP + H(+) = enolpyruvoyl-2-diphospho-5'-guanosine + diphosphate. It functions in the pathway cofactor biosynthesis; coenzyme F420 biosynthesis. In terms of biological role, guanylyltransferase that catalyzes the activation of phosphoenolpyruvate (PEP) as enolpyruvoyl-2-diphospho-5'-guanosine, via the condensation of PEP with GTP. It is involved in the biosynthesis of coenzyme F420, a hydride carrier cofactor. The protein is Phosphoenolpyruvate guanylyltransferase 1 of Rhodococcus jostii (strain RHA1).